Consider the following 159-residue polypeptide: Neuroglobin (159 aa).

The Globin domain occupies 3–151 (KLSEKDKGLI…VVSAMTRGWA (149 aa)). 2 residues coordinate heme b: His-66 and His-98.

The protein belongs to the globin family. In terms of assembly, monomer. Homodimers and homotetramers. Mainly monomeric but also detected as part of homodimers and homotetramers. In terms of tissue distribution, detected in brain, eye and gill, but not in muscle and blood (at protein level). Particularly high expression in the periventral zone of tectum opticum, with significant expression detected in white matter, preglomerular nucleus, posterior tubular nucleus, torus longitudinalis, hypothalamus, pituitary gland, posterior tuberculum, hypothalamus, synencephalon and formatio reticularis. Detected also in brain regions of the visual system, predominantly in parts of tectum opticum and torus semicircularis, area dorsalis telencephali and medulla oblongata. Strong expression observed in sensory epithelium of peripheral olfactory organ, and outer and inner nuclear layers and ganglion cell layer of retina.

It is found in the cytoplasm. Its subcellular location is the cytosol. The protein localises to the mitochondrion matrix. The catalysed reaction is Fe(III)-heme b-[protein] + nitric oxide + H2O = Fe(II)-heme b-[protein] + nitrite + 2 H(+). In terms of biological role, monomeric globin with a bis-histidyl six-coordinate heme-iron atom through which it can bind dioxygen, carbon monoxide and nitric oxide. Could help transport oxygen and increase its availability to the metabolically active neuronal tissues, though its low quantity in tissues as well as its high affinity for dioxygen, which may limit its oxygen-releasing ability, argue against it. The ferrous/deoxygenated form exhibits a nitrite reductase activity and it could produce nitric oxide which in turn inhibits cellular respiration in response to hypoxia. In its ferrous/deoxygenated state, it may also exhibit GDI (Guanine nucleotide Dissociation Inhibitor) activity toward heterotrimeric G-alpha proteins, thereby regulating signal transduction to facilitate neuroprotective responses in the wake of hypoxia and associated oxidative stress. The sequence is that of Neuroglobin (ngb) from Danio rerio (Zebrafish).